We begin with the raw amino-acid sequence, 421 residues long: Zinc finger protein 584 (421 aa).

The KRAB domain occupies 17–88; the sequence is VMFEDVTVYF…SWVDVTPVSR (72 aa). Basic and acidic residues predominate over residues 120 to 129; the sequence is QHQDTHSEGK. The tract at residues 120 to 146 is disordered; the sequence is QHQDTHSEGKPRRHTEHGAAFPPGSSC. C2H2-type zinc fingers lie at residues 159 to 181, 214 to 236, 242 to 264, 270 to 292, 298 to 320, 326 to 348, 354 to 376, and 382 to 404; these read FKCSDCGKVFLKAFALLDHLITH, HVCNECGKAFSYPSKLRKHQKVH, FKCSDCGKTFNRKDALVLHQRIH, YECSKCGKTFSVLSTLIRHRKVH, YECTECGKFFKYNNSFILHQRVH, FECKQCGKGYVTRSGLYQHWKVH, YECSLCGKTFTTRSYRNRHQQFH, and YECTECGKAFKHSSTLLQHKKVH. The interval 402-421 is disordered; it reads KVHTPERRQEDRAHGKVVSC. Residues 404-415 show a composition bias toward basic and acidic residues; sequence HTPERRQEDRAH.

It belongs to the krueppel C2H2-type zinc-finger protein family.

The protein localises to the nucleus. In terms of biological role, may be involved in transcriptional regulation. This chain is Zinc finger protein 584 (ZNF584), found in Homo sapiens (Human).